We begin with the raw amino-acid sequence, 303 residues long: Lysosomal amino acid transporter 1 homolog (303 aa).

Over 1–38 (MAEGLRAPPPPGNGSECPDGARWVLRLLGECARDGRDV) the chain is Lumenal. Asn-13 is a glycosylation site (N-linked (GlcNAc...) asparagine). Positions 36–102 (RDVGSALLGL…LANQLPLQVY (67 aa)) constitute a PQ-loop 1 domain. Residues 39 to 59 (GSALLGLLSIGCFAAAALPQF) traverse the membrane as a helical segment. Residues 60–73 (YQACKTGIMDRALS) lie on the Cytoplasmic side of the membrane. The helical transmembrane segment at 74–94 (IYFLLGWLGGDLLNLIGSFLA) threads the bilayer. Topologically, residues 95–96 (NQ) are lumenal. Residues 97 to 117 (LPLQVYTAVYYVLADLVMLSL) traverse the membrane as a helical segment. Over 118 to 131 (YGYYKAKNWGTGAT) the chain is Cytoplasmic. Residues 132-152 (ASINAACLFCLLGTATTLTVL) form a helical membrane-spanning segment. The Lumenal segment spans residues 153–182 (SHDTGPAPNPAAFGGRSLLSLGLEGPGPEP). Residues 183 to 203 (ISKTEIIGFAIGSISSVLYLC) traverse the membrane as a helical segment. One can recognise a PQ-loop 2 domain in the interval 186 to 251 (TEIIGFAIGS…LKNPEPGQSE (66 aa)). Residues 204 to 220 (SRLPQIYTNYRRKSTAG) lie on the Cytoplasmic side of the membrane. The helical transmembrane segment at 221–241 (VSFLLFALVMLGNLLYGTSVL) threads the bilayer. Topologically, residues 242 to 260 (LKNPEPGQSEGDYILHHLP) are lumenal. The helical transmembrane segment at 261–281 (WLIGSLGVLSLDVIISFQFLA) threads the bilayer. At 282–303 (YRTGQPSAGEEREALLAEHGDS) the chain is on the cytoplasmic side. The Di-leucine motif signature appears at 296–297 (LL).

Belongs to the laat-1 family.

It is found in the lysosome membrane. In terms of biological role, amino acid transporter that specifically mediates the pH-dependent export of the cationic amino acids arginine, histidine and lysine from lysosomes. The protein is Lysosomal amino acid transporter 1 homolog (SLC66A1) of Gallus gallus (Chicken).